The following is a 486-amino-acid chain: V-type proton ATPase subunit B1 (486 aa).

Residue Gly-2 is modified to N-acetylglycine.

The protein belongs to the ATPase alpha/beta chains family. V-ATPase is a heteromultimeric enzyme composed of a peripheral catalytic V1 complex (components A to H) attached to an integral membrane V0 proton pore complex (components: a, c, c'', d and e).

It localises to the vacuole membrane. In terms of biological role, non-catalytic subunit of the peripheral V1 complex of vacuolar ATPase. V-ATPase is responsible for acidifying a variety of intracellular compartments in eukaryotic cells. The polypeptide is V-type proton ATPase subunit B1 (VHA-B1) (Arabidopsis thaliana (Mouse-ear cress)).